A 280-amino-acid polypeptide reads, in one-letter code: Small ribosomal subunit protein uS3 (280 aa).

The region spanning 38 to 106 is the KH type-2 domain; it reads IRRLLSTGLE…QVQLNILEVR (69 aa). Residues 215 to 280 form a disordered region; it reads AAAAPAGAER…PAAEPQSTES (66 aa). Residues 238–280 show a composition bias toward low complexity; it reads SGASGTTATGTEAGRAAASADESTAAGQPAEAAPAAEPQSTES.

This sequence belongs to the universal ribosomal protein uS3 family. In terms of assembly, part of the 30S ribosomal subunit. Forms a tight complex with proteins S10 and S14.

Its function is as follows. Binds the lower part of the 30S subunit head. Binds mRNA in the 70S ribosome, positioning it for translation. The sequence is that of Small ribosomal subunit protein uS3 from Mycobacterium avium (strain 104).